The sequence spans 880 residues: Protein translocase subunit SecA (880 aa).

Residues Gln-87, 105–109 (GEGKT), and Asp-501 contribute to the ATP site. 4 residues coordinate Zn(2+): Cys-864, Cys-866, Cys-875, and His-876.

It belongs to the SecA family. Monomer and homodimer. Part of the essential Sec protein translocation apparatus which comprises SecA, SecYEG and auxiliary proteins SecDF-YajC and YidC. The cofactor is Zn(2+).

The protein localises to the cell inner membrane. Its subcellular location is the cytoplasm. It catalyses the reaction ATP + H2O + cellular proteinSide 1 = ADP + phosphate + cellular proteinSide 2.. In terms of biological role, part of the Sec protein translocase complex. Interacts with the SecYEG preprotein conducting channel. Has a central role in coupling the hydrolysis of ATP to the transfer of proteins into and across the cell membrane, serving both as a receptor for the preprotein-SecB complex and as an ATP-driven molecular motor driving the stepwise translocation of polypeptide chains across the membrane. This is Protein translocase subunit SecA from Orientia tsutsugamushi (strain Boryong) (Rickettsia tsutsugamushi).